A 116-amino-acid chain; its full sequence is MKTSRSTTTDQVCCPWPTPVQTPTVLNSSSPPFHAHGWTVSMLSLVKLLTVTTSLRRLSPWVLLPVPPRLELLLPSPVNYNRSAWNNTAKIETNYSLLNYMYMYKVCVCMTINSYN.

This is an uncharacterized protein from Saccharomyces cerevisiae (strain ATCC 204508 / S288c) (Baker's yeast).